Reading from the N-terminus, the 194-residue chain is Protein LKAAEAR1 (194 aa).

Positions 1–45 are disordered; sequence MPPPAKEGGRKGPRERSGKSAPGTAQGEERAKGAPATEPPKPGWA. The segment covering 7 to 18 has biased composition (basic and acidic residues); it reads EGGRKGPRERSG.

This Homo sapiens (Human) protein is Protein LKAAEAR1 (LKAAEAR1).